Here is a 326-residue protein sequence, read N- to C-terminus: Transcription factor bHLH143 (326 aa).

The segment covering 175–189 has biased composition (acidic residues); it reads SDDDDNDDWESDDEV. 2 disordered regions span residues 175 to 194 and 234 to 275; these read SDDD…STGH and RDSS…EQSR. The span at 255–271 shows a compositional bias: polar residues; that stretch reads PESNISSKQETGSGLSD. Residues 263-312 form the bHLH domain; the sequence is QETGSGLSDEQSRKDKIHTALRILESVVPGAKGKEALLLLDEAIDYLKLL.

As to quaternary structure, homodimer.

It localises to the nucleus. The chain is Transcription factor bHLH143 (BHLH143) from Arabidopsis thaliana (Mouse-ear cress).